Reading from the N-terminus, the 443-residue chain is Ribosomal protein uS12 methylthiotransferase RimO (443 aa).

One can recognise an MTTase N-terminal domain in the interval 5 to 116 (PSVAVAHLGC…IVDVIQRAEA (112 aa)). The [4Fe-4S] cluster site is built by C14, C50, C79, C154, C158, and C161. The Radical SAM core domain occupies 140-370 (TTTEGTAYVR…ALQQPISWQQ (231 aa)). The 71-residue stretch at 372 to 442 (QQEVGKTVQV…AYDLQGQLVS (71 aa)) folds into the TRAM domain.

This sequence belongs to the methylthiotransferase family. RimO subfamily. It depends on [4Fe-4S] cluster as a cofactor.

The protein resides in the cytoplasm. It catalyses the reaction L-aspartate(89)-[ribosomal protein uS12]-hydrogen + (sulfur carrier)-SH + AH2 + 2 S-adenosyl-L-methionine = 3-methylsulfanyl-L-aspartate(89)-[ribosomal protein uS12]-hydrogen + (sulfur carrier)-H + 5'-deoxyadenosine + L-methionine + A + S-adenosyl-L-homocysteine + 2 H(+). Its function is as follows. Catalyzes the methylthiolation of an aspartic acid residue of ribosomal protein uS12. In Acaryochloris marina (strain MBIC 11017), this protein is Ribosomal protein uS12 methylthiotransferase RimO.